The chain runs to 533 residues: Sterol 26-hydroxylase, mitochondrial (533 aa).

The N-terminal 32 residues, 1–32 (MAAWSRTRLRWTLLDPRVVGRGLCPQGARAKA), are a transit peptide targeting the mitochondrion. Residues 34 to 60 (IPAALQAQESTEGPGTGQDRPRLRSPA) form a disordered region. K142, K232, K285, K296, and K375 each carry N6-acetyllysine. The segment at 386 to 400 (PLLKAVIKETLRLYP) is sterol-binding. C479 is a binding site for heme. N6-acetyllysine is present on residues K512 and K523.

The protein belongs to the cytochrome P450 family. In terms of assembly, interacts with HSP70; this interaction is required for initial targeting to mitochondria. It depends on heme as a cofactor. Acetylation of Lys-125 and Lys-285 is observed in liver mitochondria from fasted mice but not from fed mice. In terms of tissue distribution, expressed in the gray and white matter of cerebellum (at protein level).

It localises to the mitochondrion inner membrane. The enzyme catalyses 5beta-cholestane-3alpha,7alpha,12alpha-triol + 6 reduced [adrenodoxin] + 3 O2 + 5 H(+) = (25R)-3alpha,7alpha,12alpha-trihydroxy-5beta-cholestan-26-oate + 6 oxidized [adrenodoxin] + 4 H2O. It carries out the reaction cholestanol + 2 reduced [adrenodoxin] + O2 + 2 H(+) = (25R)-26-hydroxycholestanol + 2 oxidized [adrenodoxin] + H2O. The catalysed reaction is (25R)-3beta-hydroxycholest-5-en-7-one-26-al + 2 reduced [adrenodoxin] + O2 + H(+) = (25R)-3beta-hydroxycholest-5-en-7-one-26-oate + 2 oxidized [adrenodoxin] + H2O. It catalyses the reaction (25R)-3beta,26-dihydroxycholest-5-en-7-one + 2 reduced [adrenodoxin] + O2 + 2 H(+) = (25R)-3beta-hydroxycholest-5-en-7-one-26-al + 2 oxidized [adrenodoxin] + 2 H2O. The enzyme catalyses 7-oxocholesterol + 2 reduced [adrenodoxin] + O2 + 2 H(+) = (25R)-3beta,26-dihydroxycholest-5-en-7-one + 2 oxidized [adrenodoxin] + H2O. It carries out the reaction calciol + 2 reduced [adrenodoxin] + O2 + 2 H(+) = calcidiol + 2 oxidized [adrenodoxin] + H2O. The catalysed reaction is (25R)-5beta-cholestane-3alpha,7alpha,12alpha,26-tetrol + 2 reduced [adrenodoxin] + O2 + 2 H(+) = (25R)-3alpha,7alpha,12alpha-trihydroxy-5beta-cholestan-26-al + 2 oxidized [adrenodoxin] + 2 H2O. It catalyses the reaction 2 reduced [adrenodoxin] + cholesterol + O2 + 2 H(+) = (25R)-cholest-5-ene-3beta,26-diol + 2 oxidized [adrenodoxin] + H2O. The enzyme catalyses (25R)-3beta,4beta-dihydroxycholest-5-en-26-al + 2 reduced [adrenodoxin] + O2 + H(+) = (25R)-3beta,4beta-dihydroxycholest-5-en-26-oate + 2 oxidized [adrenodoxin] + H2O. It carries out the reaction (25R)-4beta,26-dihydroxycholesterol + 2 reduced [adrenodoxin] + O2 + 2 H(+) = (25R)-3beta,4beta-dihydroxycholest-5-en-26-al + 2 oxidized [adrenodoxin] + 2 H2O. The catalysed reaction is 4beta-hydroxycholesterol + 2 reduced [adrenodoxin] + O2 + 2 H(+) = (25R)-4beta,26-dihydroxycholesterol + 2 oxidized [adrenodoxin] + H2O. It catalyses the reaction (25R)-3beta-hydroxy-5-cholesten-26-al + 2 reduced [adrenodoxin] + O2 + H(+) = (25R)-3beta-hydroxy-5-cholestenoate + 2 oxidized [adrenodoxin] + H2O. The enzyme catalyses (25R)-cholest-5-ene-3beta,26-diol + 2 reduced [adrenodoxin] + O2 + 2 H(+) = (25R)-3beta-hydroxy-5-cholesten-26-al + 2 oxidized [adrenodoxin] + 2 H2O. It carries out the reaction (25R)-3alpha,7alpha,12alpha-trihydroxy-5beta-cholestan-26-al + 2 reduced [adrenodoxin] + O2 + H(+) = (25R)-3alpha,7alpha,12alpha-trihydroxy-5beta-cholestan-26-oate + 2 oxidized [adrenodoxin] + H2O. The catalysed reaction is 5beta-cholestane-3alpha,7alpha,12alpha-triol + 2 reduced [adrenodoxin] + O2 + 2 H(+) = (25R)-5beta-cholestane-3alpha,7alpha,12alpha,26-tetrol + 2 oxidized [adrenodoxin] + H2O. It functions in the pathway hormone biosynthesis; cholecalciferol biosynthesis. The protein operates within steroid metabolism; cholesterol degradation. It participates in lipid metabolism; bile acid biosynthesis. Cytochrome P450 monooxygenase that catalyzes regio- and stereospecific hydroxylation of cholesterol and its derivatives. Hydroxylates (with R stereochemistry) the terminal methyl group of cholesterol side-chain in a three step reaction to yield at first a C26 alcohol, then a C26 aldehyde and finally a C26 acid. Regulates cholesterol homeostasis by catalyzing the conversion of excess cholesterol to bile acids via both the 'neutral' (classic) and the 'acid' (alternative) pathways. May also regulate cholesterol homeostasis via generation of active oxysterols, which act as ligands for NR1H2 and NR1H3 nuclear receptors, modulating the transcription of genes involved in lipid metabolism. Plays a role in cholestanol metabolism in the cerebellum. Similarly to cholesterol, hydroxylates cholestanol and may facilitate sterol diffusion through the blood-brain barrier to the systemic circulation for further degradation. Also hydroxylates retinal 7-ketocholesterol, a noxious oxysterol with pro-inflammatory and pro-apoptotic effects, and may play a role in its elimination from the retinal pigment epithelium. May play a redundant role in vitamin D biosynthesis. Catalyzes 25-hydroxylation of vitamin D3 that is required for its conversion to a functionally active form. The polypeptide is Sterol 26-hydroxylase, mitochondrial (Mus musculus (Mouse)).